Reading from the N-terminus, the 137-residue chain is Small ribosomal subunit protein uS11 (137 aa).

Positions methionine 1 to lysine 11 are enriched in polar residues. Disordered regions lie at residues methionine 1–alanine 28 and threonine 117–valine 137. Over residues lysine 12–lysine 21 the composition is skewed to basic residues.

Belongs to the universal ribosomal protein uS11 family. In terms of assembly, part of the 30S ribosomal subunit. Interacts with proteins S7 and S18. Binds to IF-3.

Functionally, located on the platform of the 30S subunit, it bridges several disparate RNA helices of the 16S rRNA. Forms part of the Shine-Dalgarno cleft in the 70S ribosome. This is Small ribosomal subunit protein uS11 from Rhodococcus opacus (strain B4).